We begin with the raw amino-acid sequence, 89 residues long: Defensin-like protein 103 (89 aa).

A signal peptide spans 1–24 (MAITRKNLVAFCFTILFIISSIHC). Intrachain disulfides connect cysteine 46/cysteine 84, cysteine 52/cysteine 75, cysteine 61/cysteine 82, and cysteine 65/cysteine 83.

Belongs to the DEFL family.

The protein localises to the secreted. The polypeptide is Defensin-like protein 103 (Arabidopsis thaliana (Mouse-ear cress)).